The following is a 256-amino-acid chain: 3-methyl-2-oxobutanoate hydroxymethyltransferase (256 aa).

Positions 42 and 86 each coordinate Mg(2+). 3-methyl-2-oxobutanoate contacts are provided by residues 42-43 (DS), aspartate 86, and lysine 116. Glutamate 118 provides a ligand contact to Mg(2+). Glutamate 185 (proton acceptor) is an active-site residue.

It belongs to the PanB family. Homodecamer; pentamer of dimers. Mg(2+) is required as a cofactor.

Its subcellular location is the cytoplasm. The enzyme catalyses 3-methyl-2-oxobutanoate + (6R)-5,10-methylene-5,6,7,8-tetrahydrofolate + H2O = 2-dehydropantoate + (6S)-5,6,7,8-tetrahydrofolate. The protein operates within cofactor biosynthesis; (R)-pantothenate biosynthesis; (R)-pantoate from 3-methyl-2-oxobutanoate: step 1/2. Its function is as follows. Catalyzes the reversible reaction in which hydroxymethyl group from 5,10-methylenetetrahydrofolate is transferred onto alpha-ketoisovalerate to form ketopantoate. This is 3-methyl-2-oxobutanoate hydroxymethyltransferase from Prochlorococcus marinus (strain SARG / CCMP1375 / SS120).